The primary structure comprises 640 residues: Lysophospholipase (640 aa).

The first 25 residues, 1–25 (MWFLNSVNLLFLVCSVALHLDAVNA), serve as a signal peptide directing secretion. One can recognise a PLA2c domain in the interval 38–589 (DCDENINLVR…EKYCWNGTVD (552 aa)). 15 N-linked (GlcNAc...) asparagine glycosylation sites follow: asparagine 84, asparagine 126, asparagine 163, asparagine 173, asparagine 218, asparagine 280, asparagine 310, asparagine 317, asparagine 348, asparagine 391, asparagine 492, asparagine 516, asparagine 544, asparagine 568, and asparagine 585. Over residues 594–610 (ISSTTSSSASSTSTSDS) the composition is skewed to low complexity. The interval 594–616 (ISSTTSSSASSTSTSDSGNKENS) is disordered.

Belongs to the lysophospholipase family. Highly glycosylated.

It is found in the secreted. It carries out the reaction a 1-acyl-sn-glycero-3-phosphocholine + H2O = sn-glycerol 3-phosphocholine + a fatty acid + H(+). Catalyzes the release of fatty acids from lysophospholipids. At acidic pH the enzyme hydrolyzes all phospholipid substrates without metal ion. On the other hand, at alkaline pH the enzyme shows substrate specificity for phosphatidylcholine and lysophosphatidylcholine and requires Ca(2+), Fe(3+), or Al(3+) for the activity. This Kluyveromyces lactis (strain ATCC 8585 / CBS 2359 / DSM 70799 / NBRC 1267 / NRRL Y-1140 / WM37) (Yeast) protein is Lysophospholipase (PLB).